The sequence spans 174 residues: uncharacterized protein (174 aa).

2 consecutive transmembrane segments (helical) span residues phenylalanine 29 to tyrosine 51 and valine 66 to isoleucine 83.

The protein localises to the cell membrane. This is an uncharacterized protein from Bacillus subtilis (strain 168).